An 839-amino-acid polypeptide reads, in one-letter code: Glycerol-3-phosphate acyltransferase (839 aa).

An HXXXXD motif motif is present at residues Cys-309–Ile-314.

This sequence belongs to the GPAT/DAPAT family.

It localises to the cell inner membrane. The enzyme catalyses sn-glycerol 3-phosphate + an acyl-CoA = a 1-acyl-sn-glycero-3-phosphate + CoA. Its pathway is phospholipid metabolism; CDP-diacylglycerol biosynthesis; CDP-diacylglycerol from sn-glycerol 3-phosphate: step 1/3. The polypeptide is Glycerol-3-phosphate acyltransferase (Pseudomonas fluorescens (strain SBW25)).